The chain runs to 364 residues: A-type ATP synthase subunit C (364 aa).

The protein belongs to the V-ATPase V0D/AC39 subunit family. Has multiple subunits with at least A(3), B(3), C, D, E, F, H, I and proteolipid K(x).

It localises to the cell membrane. Functionally, component of the A-type ATP synthase that produces ATP from ADP in the presence of a proton gradient across the membrane. This Desulfurococcus sp. (strain SY) protein is A-type ATP synthase subunit C.